A 161-amino-acid chain; its full sequence is Xanthine-guanine phosphoribosyltransferase (161 aa).

Residues 41-42 and 95-103 each bind 5-phospho-alpha-D-ribose 1-diphosphate; these read RG and DDLVDTGNT. A Mg(2+)-binding site is contributed by D96. The guanine site is built by D99 and I142. The xanthine site is built by D99 and I142. GMP contacts are provided by residues 99-103 and 141-142; these read DTGNT and WI.

The protein belongs to the purine/pyrimidine phosphoribosyltransferase family. XGPT subfamily. Homotetramer. Requires Mg(2+) as cofactor.

It is found in the cell inner membrane. It catalyses the reaction GMP + diphosphate = guanine + 5-phospho-alpha-D-ribose 1-diphosphate. It carries out the reaction XMP + diphosphate = xanthine + 5-phospho-alpha-D-ribose 1-diphosphate. The catalysed reaction is IMP + diphosphate = hypoxanthine + 5-phospho-alpha-D-ribose 1-diphosphate. The protein operates within purine metabolism; GMP biosynthesis via salvage pathway; GMP from guanine: step 1/1. It participates in purine metabolism; XMP biosynthesis via salvage pathway; XMP from xanthine: step 1/1. In terms of biological role, purine salvage pathway enzyme that catalyzes the transfer of the ribosyl-5-phosphate group from 5-phospho-alpha-D-ribose 1-diphosphate (PRPP) to the N9 position of the 6-oxopurines guanine and xanthine to form the corresponding ribonucleotides GMP (guanosine 5'-monophosphate) and XMP (xanthosine 5'-monophosphate), with the release of PPi. To a lesser extent, also acts on hypoxanthine. This Idiomarina loihiensis (strain ATCC BAA-735 / DSM 15497 / L2-TR) protein is Xanthine-guanine phosphoribosyltransferase.